We begin with the raw amino-acid sequence, 585 residues long: Organic cation transporter 1 (585 aa).

Residues 1 to 40 (MSFQAMETFAEISQEILMSATKPPDFDFVLEQVGNYGTYQ) lie on the Cytoplasmic side of the membrane. The helical transmembrane segment at 41 to 61 (IVFFFIICLPTSLPSAFSAFN) threads the bilayer. Residues 62–155 (IPFVVGNPPH…LVCDQQAWIE (94 aa)) are Extracellular-facing. 3 N-linked (GlcNAc...) asparagine glycosylation sites follow: Asn87, Asn98, and Asn133. The chain crosses the membrane as a helical span at residues 156–176 (ISTTSFYVGSFIGNCLFGYVA). Residues 177–184 (DKFGRRRS) lie on the Cytoplasmic side of the membrane. A helical membrane pass occupies residues 185 to 205 (FFVILTVLIVCGTASSFAKDI). Topologically, residues 206–212 (ESFIILR) are extracellular. The helical transmembrane segment at 213-233 (FFTGLAFPALFQIPFIICMEF) threads the bilayer. Topologically, residues 234 to 243 (MGNSGRIFSG) are cytoplasmic. Residues 244-264 (LMTSLFFGAAMALLGVVAMFI) form a helical membrane-spanning segment. Residues 265-269 (RRWRQ) are Extracellular-facing. A helical transmembrane segment spans residues 270-290 (LTFFCNAPFAFYIIYYFFLPE). At 291–360 (SPRWSVSVGK…FKTPNLRRKT (70 aa)) the chain is on the cytoplasmic side. Residues 361-381 (LIVTYIWVMNAIIYNGLTLNV) form a helical membrane-spanning segment. The Extracellular portion of the chain corresponds to 382 to 389 (SNLPVDDY). The chain crosses the membrane as a helical span at residues 390–410 (WSFIINGAVELPGYFVVWPLL). Topologically, residues 411-416 (QCAGRR) are cytoplasmic. A helical membrane pass occupies residues 417–437 (WTLAATMIVCGIGCVSAMFMP). Topologically, residues 438-446 (DGYPWLVAS) are extracellular. Residues 447–467 (ASFIGKFGVGSGFAVIYIFAG) form a helical membrane-spanning segment. Topologically, residues 468–476 (ELYPTVVRA) are cytoplasmic. A helical transmembrane segment spans residues 477-497 (IGMGMSSMVAGSGLLLAPHIV). At 498-504 (NLGKIVK) the chain is on the extracellular side. Residues 505–525 (ILPLLIMGLMALSAGILTFFL) form a helical membrane-spanning segment. The Cytoplasmic portion of the chain corresponds to 526 to 585 (PETLGAPLPMTIEDAENFGKKPEPDSGMFTQAAKKRESQPLLEPHTPMDRRRRSSRLMNI). The disordered stretch occupies residues 544–585 (GKKPEPDSGMFTQAAKKRESQPLLEPHTPMDRRRRSSRLMNI). The segment covering 575–585 (RRRRSSRLMNI) has biased composition (basic residues).

Belongs to the major facilitator (TC 2.A.1) superfamily. Organic cation transporter (TC 2.A.1.19) family.

Its subcellular location is the membrane. Functionally, transports organic cations such as tetraethylammonium (TEA). Displays a broad substrate specificity. The chain is Organic cation transporter 1 (oct-1) from Caenorhabditis elegans.